We begin with the raw amino-acid sequence, 298 residues long: Glutamyl-Q tRNA(Asp) synthetase (298 aa).

Residues 8–12 and Glu44 each bind L-glutamate; that span reads RFAPS. The 'HIGH' region motif lies at 11 to 21; it reads PSPTGPLHFGS. Residues Cys100, Cys102, Tyr123, and Cys127 each contribute to the Zn(2+) site. Tyr183 and Arg201 together coordinate L-glutamate. Positions 239 to 243 match the 'KMSKS' region motif; sequence KLSKQ. An ATP-binding site is contributed by Lys242.

The protein belongs to the class-I aminoacyl-tRNA synthetase family. GluQ subfamily. It depends on Zn(2+) as a cofactor.

Its function is as follows. Catalyzes the tRNA-independent activation of glutamate in presence of ATP and the subsequent transfer of glutamate onto a tRNA(Asp). Glutamate is transferred on the 2-amino-5-(4,5-dihydroxy-2-cyclopenten-1-yl) moiety of the queuosine in the wobble position of the QUC anticodon. The protein is Glutamyl-Q tRNA(Asp) synthetase of Burkholderia orbicola (strain AU 1054).